The sequence spans 245 residues: MTLTASSSSRAVTNSPVVVALDYHNRDAALAFVDKIDPRDCRLKVGKEMFTLFGPQFVRELQQRGFDIFLDLKFHDIPNTAAHAVAAAADLGVWMVNVHASGGARMMTAAREALVPFGKDAPLLIAVTVLTSMEASDLADLGVTLSPADYAERLAALTQKCGLDGVVCSAQEAVRFKQVFGQEFKLVTPGIRPQGSEAGDQRRIMTPEQALAAGVDYMVIGRPVTQSVDPAQTLKAINASLQRSA.

Substrate-binding positions include Asp22, Lys44, 71–80, Thr131, Arg192, Gln201, Gly221, and Arg222; that span reads DLKFHDIPNT. Lys73 acts as the Proton donor in catalysis.

Belongs to the OMP decarboxylase family. Type 1 subfamily. As to quaternary structure, homodimer.

The catalysed reaction is orotidine 5'-phosphate + H(+) = UMP + CO2. Its pathway is pyrimidine metabolism; UMP biosynthesis via de novo pathway; UMP from orotate: step 2/2. Its function is as follows. Catalyzes the decarboxylation of orotidine 5'-monophosphate (OMP) to uridine 5'-monophosphate (UMP). This chain is Orotidine 5'-phosphate decarboxylase, found in Escherichia coli O157:H7.